A 350-amino-acid chain; its full sequence is MATTKLVYILLILFTFTVSPAISTAPEHCDSGFDNPCINKAKALPLKIVAIVAILTTSLIGVTSPLFSRYISFLRPDGNGFMIVKCFSSGIILGTGFMHVLPDSFEMLSSKCLSDNPWHKFPFAGFVAMMSGLVTLAIDSITTSLYTGKNSVGPVPDEEYGIDQEKAIHMVGHNHSHGHGVVLATKDDGQLLRYQVIAMVLEVGILFHSVVIGLSLGATNDSCTIKGLIIALCFHHLFEGIGLGGCILQADFTNVKKFLMAFFFTGTTPCGIFLGIALSSIYRDNSPTALITIGLLNACSAGMLIYMALVDLLATEFMGSMLQGSIKLQIKCFTAALLGCAVMSVVAVWA.

Residues Met1–Ala21 form the signal peptide. Residues Ile22–Lys47 lie on the Extracellular side of the membrane. A helical transmembrane segment spans residues Ile48–Ser68. Topologically, residues Arg69–Gly80 are cytoplasmic. A helical membrane pass occupies residues Phe81–Leu101. Residues Pro102–Lys120 lie on the Extracellular side of the membrane. The chain crosses the membrane as a helical span at residues Phe121 to Ile141. Residues Thr142–Gln195 lie on the Cytoplasmic side of the membrane. Residues Val196 to Leu216 traverse the membrane as a helical segment. At Gly217–Gly227 the chain is on the extracellular side. The helical transmembrane segment at Leu228 to Leu248 threads the bilayer. Residues Gln249 to Lys257 lie on the Cytoplasmic side of the membrane. A helical transmembrane segment spans residues Phe258–Leu278. At Ser279–Ala289 the chain is on the extracellular side. Residues Leu290–Val310 traverse the membrane as a helical segment. The Cytoplasmic portion of the chain corresponds to Asp311 to Gln329. The chain crosses the membrane as a helical span at residues Ile330 to Ala350.

It belongs to the ZIP transporter (TC 2.A.5) family. As to expression, expressed in the external cell layers of the root subapical zone.

The protein resides in the cell membrane. In terms of biological role, high-affinity iron transporter that mediates under iron-deficiency the iron uptake from the rhizosphere across the plasma membrane in the root epidermal layer. Could also be capable of transporting zinc ions. The sequence is that of Fe(2+) transport protein 2 (IRT2) from Arabidopsis thaliana (Mouse-ear cress).